We begin with the raw amino-acid sequence, 992 residues long: Disks large-associated protein 1 (992 aa).

2 disordered regions span residues 150–209 and 355–376; these read TKSH…SWWS and KAMG…PKVA. At S169 the chain carries Phosphoserine. The segment covering 194-209 has biased composition (low complexity); sequence RSNASNASPTSPSWWS. Residues S362, S365, S368, S372, S389, S418, S421, S425, S428, S437, S509, S516, and S578 each carry the phosphoserine modification. At T579 the chain carries Phosphothreonine. 2 positions are modified to phosphoserine: S581 and S605. Residue T606 is modified to Phosphothreonine. S608 and S611 each carry phosphoserine. 2 interaction with DYL2 regions span residues 665 to 676 and 687 to 698; these read LSIGIQVDDAEE and NKFQSVGVQVEE. The disordered stretch occupies residues 914 to 980; that stretch reads WKQMDPLDKK…QNSATESAES (67 aa). Composition is skewed to basic and acidic residues over residues 918–927 and 943–958; these read DPLDKKERRA and IRER…EARK. Position 947 is a phosphoserine (S947). Residues 969 to 978 show a composition bias toward polar residues; sequence VRQNSATESA. The short motif at 990 to 992 is the PDZ-binding element; it reads TRL.

It belongs to the SAPAP family. As to quaternary structure, interacts with the guanylate kinase-like domain of DLG1, DLG2, DLG3, DLG4 and AIP1. Interacts with the PDZ domain of SHANK1, SHANK2 and SHANK3. Found in a complex with DLG4 and SHANK1, SHANK2 or SHANK3. Found in a complex with DLG4 and BEGAIN. Interacts with DYL2 and LRFN1. Interacts with MPP2 (via the SH3-Guanylate kinase-like sub-module). In terms of processing, ubiquitinated by TRIM3; leading to proteasomal degradation. In terms of tissue distribution, highest levels in the neocortex, part of the hippocampus, the granule cell layer of the cerebellum, the glomerular layer of the olfactory bulb, the inner plexiform layer of the retina, the ventral and dorsal horn of the spinal cord, the neuromuscular junction and the submandibular ganglion.

The protein resides in the cell membrane. It localises to the postsynaptic density. Its subcellular location is the synapse. Part of the postsynaptic scaffold in neuronal cells. This Mus musculus (Mouse) protein is Disks large-associated protein 1 (Dlgap1).